The chain runs to 481 residues: Probable squalene synthase (481 aa).

Helical transmembrane passes span 294-314 (SVFN…ELVF) and 416-436 (FLVL…IGAA).

It belongs to the phytoene/squalene synthase family. It depends on Mg(2+) as a cofactor.

It localises to the endoplasmic reticulum membrane. The enzyme catalyses 2 (2E,6E)-farnesyl diphosphate + NADPH + H(+) = squalene + 2 diphosphate + NADP(+). It carries out the reaction 2 (2E,6E)-farnesyl diphosphate + NADH + H(+) = squalene + 2 diphosphate + NAD(+). It functions in the pathway terpene metabolism; lanosterol biosynthesis; lanosterol from farnesyl diphosphate: step 1/3. Catalyzes the condensation of 2 two farnesyl pyrophosphate moieties to form squalene. It is the first committed enzyme of the sterol biosynthesis pathway. Required for the biosynthesis of ergosterol. This chain is Probable squalene synthase (erg-6), found in Neurospora crassa (strain ATCC 24698 / 74-OR23-1A / CBS 708.71 / DSM 1257 / FGSC 987).